Reading from the N-terminus, the 510-residue chain is DNA nucleotidylexotransferase (510 aa).

Positions 11-17 match the Nuclear localization signal motif; the sequence is PRRKQPK. The BRCT domain maps to 27-124; the sequence is KYDIKFKDIA…QPVEIERKHR (98 aa). The interval 254 to 258 is involved in DNA binding; that stretch reads VGLRT. A 2'-deoxyribonucleoside 5'-triphosphate is bound by residues 329 to 334 and 338 to 341; these read GFRRGN and HDVD. 3 residues coordinate Mg(2+): Asp339, Asp341, and Asp434. 449–450 contacts a 2'-deoxyribonucleoside 5'-triphosphate; that stretch reads GW.

It belongs to the DNA polymerase type-X family. Requires Mg(2+) as cofactor.

It localises to the nucleus. The catalysed reaction is DNA(n) + a 2'-deoxyribonucleoside 5'-triphosphate = DNA(n+1) + diphosphate. Functionally, template-independent DNA polymerase which catalyzes the random addition of deoxynucleoside 5'-triphosphate to the 3'-end of a DNA initiator. One of the in vivo functions of this enzyme is the addition of nucleotides at the junction (N region) of rearranged Ig heavy chain and T-cell receptor gene segments during the maturation of B- and T-cells. The polypeptide is DNA nucleotidylexotransferase (DNTT) (Ambystoma mexicanum (Axolotl)).